The chain runs to 651 residues: LysM domain receptor-like kinase 3 (651 aa).

The N-terminal stretch at Met-1–Ser-19 is a signal peptide. 8 N-linked (GlcNAc...) asparagine glycosylation sites follow: Asn-2, Asn-23, Asn-42, Asn-73, Asn-86, Asn-100, Asn-114, and Asn-177. Residues Lys-20–Tyr-236 lie on the Extracellular side of the membrane. 3 disulfide bridges follow: Cys-24–Cys-76, Cys-31–Cys-133, and Cys-74–Cys-131. One can recognise a LysM domain in the interval Met-142–Ile-186. The disordered stretch occupies residues Tyr-196–Asn-216. N-linked (GlcNAc...) asparagine glycans are attached at residues Asn-218 and Asn-225. A helical membrane pass occupies residues Ile-237–Cys-257. The Cytoplasmic segment spans residues Ile-258–Arg-651. At Thr-330 the chain carries Phosphothreonine. One can recognise a Protein kinase domain in the interval Phe-341 to Leu-628. ATP is bound by residues Leu-347–Val-355 and Lys-368. Tyr-410 bears the Phosphotyrosine mark. Residue Asp-464 is the Proton acceptor of the active site. Ser-468 is subject to Phosphoserine. Phosphothreonine is present on residues Thr-500 and Thr-505. A Phosphotyrosine modification is found at Tyr-513.

The protein belongs to the protein kinase superfamily. Ser/Thr protein kinase family.

It is found in the cell membrane. Putative Lysin motif (LysM) receptor kinase that may recognize microbe-derived N-acetylglucosamine (NAG)-containing ligands. This chain is LysM domain receptor-like kinase 3 (LYK3), found in Arabidopsis thaliana (Mouse-ear cress).